A 334-amino-acid polypeptide reads, in one-letter code: Magnesium-chelatase subunit ChlI (334 aa).

Residue 43-50 (GDRGTGKS) participates in ATP binding.

This sequence belongs to the Mg-chelatase subunits D/I family.

It localises to the plastid. It is found in the chloroplast. The enzyme catalyses protoporphyrin IX + Mg(2+) + ATP + H2O = Mg-protoporphyrin IX + ADP + phosphate + 3 H(+). It participates in porphyrin-containing compound metabolism; chlorophyll biosynthesis. Its function is as follows. Involved in chlorophyll biosynthesis; introduces a magnesium ion into protoporphyrin IX to yield Mg-protoporphyrin IX. The chain is Magnesium-chelatase subunit ChlI (chlI) from Olisthodiscus luteus (Marine phytoflagellate).